Here is a 403-residue protein sequence, read N- to C-terminus: Large ribosomal subunit protein uL3 (403 aa).

Residues 1 to 38 are disordered; that stretch reads MSHRKFSAPRHGSLGFLPRKRSSRHRGKVKSFPKDDSS. At serine 13 the chain carries Phosphoserine. The span at 18–31 shows a compositional bias: basic residues; sequence PRKRSSRHRGKVKS. A Glycyl lysine isopeptide (Lys-Gly) (interchain with G-Cter in SUMO2) cross-link involves residue lysine 39. Lysine 136 carries the N6-acetyllysine modification. Residues lysine 224 and lysine 226 each participate in a glycyl lysine isopeptide (Lys-Gly) (interchain with G-Cter in SUMO2) cross-link. Tele-methylhistidine is present on histidine 245. An N6-acetyllysine; alternate mark is found at lysine 286 and lysine 294. Residue lysine 286 forms a Glycyl lysine isopeptide (Lys-Gly) (interchain with G-Cter in SUMO2); alternate linkage. Residue lysine 294 forms a Glycyl lysine isopeptide (Lys-Gly) (interchain with G-Cter in SUMO1); alternate linkage. A Phosphoserine modification is found at serine 304. Lysine 366 carries the post-translational modification N6-acetyllysine; alternate. Residue lysine 366 forms a Glycyl lysine isopeptide (Lys-Gly) (interchain with G-Cter in SUMO2); alternate linkage. Lysine 373 is modified (N6-acetyllysine). Residues lysine 386, lysine 393, and lysine 399 each participate in a glycyl lysine isopeptide (Lys-Gly) (interchain with G-Cter in SUMO2) cross-link.

This sequence belongs to the universal ribosomal protein uL3 family. Component of the large ribosomal subunit. Interacts with DHX33. Post-translationally, constitutively monomethylated at His-245 by METTL18. Methylation at His-245 regulates translation elongation by slowing ribosome traversal on tyrosine codons: slower elongation provides enough time for proper folding of synthesized proteins and prevents cellular aggregation of tyrosine-rich proteins It is not required for incorporation of RPL3 into ribosomes.

It is found in the nucleus. It localises to the nucleolus. The protein localises to the cytoplasm. In terms of biological role, component of the large ribosomal subunit. The ribosome is a large ribonucleoprotein complex responsible for the synthesis of proteins in the cell. This Bos taurus (Bovine) protein is Large ribosomal subunit protein uL3 (RPL3).